Reading from the N-terminus, the 161-residue chain is Small ribosomal subunit protein eS6 (161 aa).

A disordered region spans residues 119-161 (VLLGEEEPEDADDDGDSDVDADEATDTDAGSEEDNDDDIADAE). The span at 122–161 (GEEEPEDADDDGDSDVDADEATDTDAGSEEDNDDDIADAE) shows a compositional bias: acidic residues.

The protein belongs to the eukaryotic ribosomal protein eS6 family.

The polypeptide is Small ribosomal subunit protein eS6 (Haloquadratum walsbyi (strain DSM 16790 / HBSQ001)).